A 229-amino-acid chain; its full sequence is Cytidylate kinase (229 aa).

10-18 contacts ATP; that stretch reads GFSSCGKST.

The protein belongs to the cytidylate kinase family. Type 1 subfamily.

The protein resides in the cytoplasm. It catalyses the reaction CMP + ATP = CDP + ADP. It carries out the reaction dCMP + ATP = dCDP + ADP. This Bacteroides fragilis (strain ATCC 25285 / DSM 2151 / CCUG 4856 / JCM 11019 / LMG 10263 / NCTC 9343 / Onslow / VPI 2553 / EN-2) protein is Cytidylate kinase.